The primary structure comprises 150 residues: Large ribosomal subunit protein bL9 (150 aa).

This sequence belongs to the bacterial ribosomal protein bL9 family.

Binds to the 23S rRNA. This is Large ribosomal subunit protein bL9 from Delftia acidovorans (strain DSM 14801 / SPH-1).